Consider the following 567-residue polypeptide: Urease subunit alpha (567 aa).

In terms of domain architecture, Urease spans 129–567; the sequence is GGIDAHIHFI…LPMAQRYFLF (439 aa). Residues histidine 134, histidine 136, and lysine 217 each coordinate Ni(2+). An N6-carboxylysine modification is found at lysine 217. Histidine 219 contacts substrate. 2 residues coordinate Ni(2+): histidine 246 and histidine 272. The active-site Proton donor is the histidine 320. Aspartate 360 is a Ni(2+) binding site.

The protein belongs to the metallo-dependent hydrolases superfamily. Urease alpha subunit family. Heterotrimer of UreA (gamma), UreB (beta) and UreC (alpha) subunits. Three heterotrimers associate to form the active enzyme. Ni cation serves as cofactor. Post-translationally, carboxylation allows a single lysine to coordinate two nickel ions.

It is found in the cytoplasm. The enzyme catalyses urea + 2 H2O + H(+) = hydrogencarbonate + 2 NH4(+). Its pathway is nitrogen metabolism; urea degradation; CO(2) and NH(3) from urea (urease route): step 1/1. The polypeptide is Urease subunit alpha (Teredinibacter turnerae (strain ATCC 39867 / T7901)).